A 275-amino-acid chain; its full sequence is Large ribosomal subunit protein uL2 (275 aa).

A disordered region spans residues 208 to 275 (AGAKRWRGRR…NMIIRDRRKK (68 aa)). Basic residues-rich tracts occupy residues 209 to 219 (GAKRWRGRRPT) and 254 to 263 (KGYKTRRNKR).

It belongs to the universal ribosomal protein uL2 family. In terms of assembly, part of the 50S ribosomal subunit. Forms a bridge to the 30S subunit in the 70S ribosome.

In terms of biological role, one of the primary rRNA binding proteins. Required for association of the 30S and 50S subunits to form the 70S ribosome, for tRNA binding and peptide bond formation. It has been suggested to have peptidyltransferase activity; this is somewhat controversial. Makes several contacts with the 16S rRNA in the 70S ribosome. The chain is Large ribosomal subunit protein uL2 from Coxiella burnetii (strain CbuK_Q154) (Coxiella burnetii (strain Q154)).